Consider the following 87-residue polypeptide: Conotoxin QcMNCL-XIII0.1 (87 aa).

Positions 1–18 (MNCLQLLLVLLLISTIAA) are cleaved as a signal peptide. Positions 19–34 (LHGDGRVPQRRGRNIR) are excised as a propeptide.

Contains 4 disulfide bonds. As to expression, expressed by the venom duct.

It localises to the secreted. In terms of biological role, may interact and inhibit Cav3.1/CACNA1G calcium channels. In a ex vivo model, shows ability to block nerve signal transduction. This Conus quercinus (Oak cone) protein is Conotoxin QcMNCL-XIII0.1.